We begin with the raw amino-acid sequence, 85 residues long: uncharacterized protein (85 aa).

The disordered stretch occupies residues 44 to 85; the sequence is EAHPSEHNGTVPRSLSQEWAKILAEEAEENSEENNDESEEDN. Polar residues predominate over residues 50-60; sequence HNGTVPRSLSQ. A compositionally biased stretch (acidic residues) spans 68-85; the sequence is EEAEENSEENNDESEEDN.

This is an uncharacterized protein from Haloarcula hispanica (His1V).